The primary structure comprises 564 residues: Arginine--tRNA ligase (564 aa).

Positions 130–140 (ANPTGSLHIGH) match the 'HIGH' region motif.

Belongs to the class-I aminoacyl-tRNA synthetase family. Monomer.

The protein localises to the cytoplasm. It carries out the reaction tRNA(Arg) + L-arginine + ATP = L-arginyl-tRNA(Arg) + AMP + diphosphate. The sequence is that of Arginine--tRNA ligase from Malacoplasma penetrans (strain HF-2) (Mycoplasma penetrans).